Here is a 462-residue protein sequence, read N- to C-terminus: Elongation factor 1-alpha, somatic form (462 aa).

Residue glycine 2 is modified to N,N,N-trimethylglycine. In terms of domain architecture, tr-type G spans 5–242 (KTHINIVVIG…DCILPPSRPT (238 aa)). Residues 14–21 (GHVDSGKS) are G1. 14–21 (GHVDSGKS) lines the GTP pocket. Residues 70–74 (GITID) form a G2 region. Positions 91–94 (DAPG) are G3. GTP contacts are provided by residues 91–95 (DAPGH) and 153–156 (NKMD). The segment at 153-156 (NKMD) is G4. A G5 region spans residues 194 to 196 (SGW). 5-glutamyl glycerylphosphorylethanolamine occurs at positions 301 and 374.

Belongs to the TRAFAC class translation factor GTPase superfamily. Classic translation factor GTPase family. EF-Tu/EF-1A subfamily.

It is found in the cytoplasm. Its function is as follows. This protein promotes the GTP-dependent binding of aminoacyl-tRNA to the A-site of ribosomes during protein biosynthesis. The protein is Elongation factor 1-alpha, somatic form (eef1as) of Xenopus laevis (African clawed frog).